Reading from the N-terminus, the 125-residue chain is Holo-[acyl-carrier-protein] synthase (125 aa).

Mg(2+)-binding residues include Asp-8 and Glu-57.

Belongs to the P-Pant transferase superfamily. AcpS family. Requires Mg(2+) as cofactor.

Its subcellular location is the cytoplasm. The catalysed reaction is apo-[ACP] + CoA = holo-[ACP] + adenosine 3',5'-bisphosphate + H(+). Transfers the 4'-phosphopantetheine moiety from coenzyme A to a Ser of acyl-carrier-protein. The sequence is that of Holo-[acyl-carrier-protein] synthase from Geobacter sp. (strain M21).